A 190-amino-acid polypeptide reads, in one-letter code: Zinc finger C2H2 protein ECU03_0790 (190 aa).

C2H2-type zinc fingers lie at residues 4–27 (RCCFEGCGKSFPRRAKLSDHLNTH), 33–55 (YKCDMCEKSYMKNGHLSVHKKKH), 85–108 (YKCGICGKRYRKRSWFDVHVESHH), and 119–142 (HVCEYCKFEFNKKSNLSTHVRSVH).

This is Zinc finger C2H2 protein ECU03_0790 from Encephalitozoon cuniculi (strain GB-M1) (Microsporidian parasite).